The following is a 206-amino-acid chain: Large ribosomal subunit protein uL4 (206 aa).

The disordered stretch occupies residues 48–75 (TQSAKTRAEVSGGGIKPWRQKGTGRARQ).

Belongs to the universal ribosomal protein uL4 family. In terms of assembly, part of the 50S ribosomal subunit.

Its function is as follows. One of the primary rRNA binding proteins, this protein initially binds near the 5'-end of the 23S rRNA. It is important during the early stages of 50S assembly. It makes multiple contacts with different domains of the 23S rRNA in the assembled 50S subunit and ribosome. Forms part of the polypeptide exit tunnel. This Clostridium botulinum (strain Loch Maree / Type A3) protein is Large ribosomal subunit protein uL4.